Reading from the N-terminus, the 338-residue chain is RNA 3'-terminal phosphate cyclase (338 aa).

ATP-binding positions include Gln-103 and Tyr-283–Gln-287. Residue His-308 is the Tele-AMP-histidine intermediate of the active site.

This sequence belongs to the RNA 3'-terminal cyclase family. Type 1 subfamily.

It localises to the cytoplasm. It catalyses the reaction a 3'-end 3'-phospho-ribonucleotide-RNA + ATP = a 3'-end 2',3'-cyclophospho-ribonucleotide-RNA + AMP + diphosphate. Catalyzes the conversion of 3'-phosphate to a 2',3'-cyclic phosphodiester at the end of RNA. The mechanism of action of the enzyme occurs in 3 steps: (A) adenylation of the enzyme by ATP; (B) transfer of adenylate to an RNA-N3'P to produce RNA-N3'PP5'A; (C) and attack of the adjacent 2'-hydroxyl on the 3'-phosphorus in the diester linkage to produce the cyclic end product. The biological role of this enzyme is unknown but it is likely to function in some aspects of cellular RNA processing. The chain is RNA 3'-terminal phosphate cyclase from Escherichia coli O45:K1 (strain S88 / ExPEC).